The chain runs to 359 residues: uncharacterized protein (359 aa).

This is an uncharacterized protein from Dictyostelium discoideum (Social amoeba).